A 337-amino-acid chain; its full sequence is D-alanine--D-alanine ligase (337 aa).

The 207-residue stretch at 124 to 330 (KMWFSALGIP…FTEYLSLVIN (207 aa)) folds into the ATP-grasp domain. 154–209 (ALAQWGSIFVKAASQGSSVGCYKVDDSAKVAGVLKDAFGYAPYVIVEKTIKARELE) is an ATP binding site. Residues D284, E297, and N299 each coordinate Mg(2+).

The protein belongs to the D-alanine--D-alanine ligase family. Mg(2+) serves as cofactor. Mn(2+) is required as a cofactor.

The protein resides in the cytoplasm. The catalysed reaction is 2 D-alanine + ATP = D-alanyl-D-alanine + ADP + phosphate + H(+). It participates in cell wall biogenesis; peptidoglycan biosynthesis. Cell wall formation. The protein is D-alanine--D-alanine ligase of Shewanella baltica (strain OS185).